A 119-amino-acid chain; its full sequence is Protein yippee-like 2 (119 aa).

The Yippee domain occupies 19 to 116 (RTYSCIHCRA…IELAHMIKDN (98 aa)). Zn(2+)-binding residues include cysteine 23, cysteine 26, cysteine 79, and cysteine 82.

This sequence belongs to the yippee family. As to quaternary structure, may interact with FAM168B.

The protein localises to the nucleus. It is found in the nucleolus. The chain is Protein yippee-like 2 (YPEL2) from Chlorocebus aethiops (Green monkey).